We begin with the raw amino-acid sequence, 428 residues long: MIIFKNLILKISSLRFAISLIIFIAITSGIGTFIPQGNSNKFYIDNFDSAPIFGFLDGEKVLKLQLDHIYTSIWFLFTLILLCISLSACSFRRQIPSLKASLKWIEYNNEKKFSKLQLTSSHPINQDGDHISKVDLLLKKRGWKTYKFKSHISARRGLIGKIGPLVVHIGLIVLLLGSAYGSFTSQSNEQYLLPGESLDLVNESTNSKANIKLVNFSIERESDGIPKQFISKLNFSSEDLNINEIKTAKVNHPIRFKGLTIYQADWAISNVVLEIDNILYQLQLKEIPEIGNQVWGVLVELGSETKKNFLLTIDNENGPLKISNVENFSGNNLYINDRPLEVNSSKVSLKKIIPSSGLIIKNDPSIPFIYFSFILIIFGTIISLIPTNQLWIFVNKESHKLSIGGLSNKNLVGFKKEFFKLSEEIKNF.

3 consecutive transmembrane segments (helical) span residues 14 to 34, 72 to 92, and 162 to 182; these read LRFA…GTFI, SIWF…CSFR, and IGPL…AYGS.

This sequence belongs to the Ccs1/CcsB family. May interact with CcsA.

The protein localises to the cellular thylakoid membrane. Its function is as follows. Required during biogenesis of c-type cytochromes (cytochrome c6 and cytochrome f) at the step of heme attachment. The protein is Cytochrome c biogenesis protein CcsB of Prochlorococcus marinus (strain MIT 9312).